Reading from the N-terminus, the 827-residue chain is Beta-galactosidase 1 (827 aa).

A signal peptide spans 1-25 (MMGRRGSSWCRWWVALLVLAVAADA). E187 serves as the catalytic Proton donor. 2 N-linked (GlcNAc...) asparagine glycosylation sites follow: N198 and N249. The active-site Nucleophile is the E259. N260, N366, N392, N502, N520, N578, N586, and N615 each carry an N-linked (GlcNAc...) asparagine glycan. The 82-residue stretch at 746 to 827 (GEAGDAVTLS…SGVLTVQATC (82 aa)) folds into the SUEL-type lectin domain.

The protein belongs to the glycosyl hydrolase 35 family.

It localises to the secreted. The protein localises to the extracellular space. It is found in the apoplast. It carries out the reaction Hydrolysis of terminal non-reducing beta-D-galactose residues in beta-D-galactosides.. This is Beta-galactosidase 1 from Oryza sativa subsp. japonica (Rice).